A 158-amino-acid polypeptide reads, in one-letter code: Class 10 plant pathogenesis-related protein 2D (158 aa).

Asp-8 is a trans-zeatin binding site. Pro-32, Val-35, and Ile-38 together coordinate Ca(2+). Trans-zeatin-binding residues include Glu-60, His-69, Tyr-81, and Tyr-83.

It belongs to the BetVI family.

The protein localises to the cytoplasm. It is found in the cytosol. In terms of biological role, class II ribonuclease (RNase). Binds to cytokinins. Interacts with melatonin. In Lupinus luteus (European yellow lupine), this protein is Class 10 plant pathogenesis-related protein 2D.